The primary structure comprises 447 residues: Argininosuccinate synthase (447 aa).

Residues 17 to 25 (AFSGGLDTS) and A43 each bind ATP. Y99 lines the L-citrulline pocket. ATP contacts are provided by G129 and T131. L-aspartate is bound by residues T131, N135, and D136. L-citrulline is bound at residue N135. D136 is a binding site for ATP. Residues R139 and S192 each contribute to the L-citrulline site. Residue D194 participates in ATP binding. L-citrulline is bound by residues T201, E203, and E280.

Belongs to the argininosuccinate synthase family. Type 2 subfamily. As to quaternary structure, homotetramer.

The protein resides in the cytoplasm. It catalyses the reaction L-citrulline + L-aspartate + ATP = 2-(N(omega)-L-arginino)succinate + AMP + diphosphate + H(+). Its pathway is amino-acid biosynthesis; L-arginine biosynthesis; L-arginine from L-ornithine and carbamoyl phosphate: step 2/3. This Salmonella schwarzengrund (strain CVM19633) protein is Argininosuccinate synthase.